Here is a 356-residue protein sequence, read N- to C-terminus: tRNA N6-adenosine threonylcarbamoyltransferase (356 aa).

Fe cation contacts are provided by H115 and H119. Residues 138–142 (LVSGG), D171, G184, and N283 contribute to the substrate site. D311 lines the Fe cation pocket.

The protein belongs to the KAE1 / TsaD family. Fe(2+) is required as a cofactor.

It is found in the cytoplasm. It catalyses the reaction L-threonylcarbamoyladenylate + adenosine(37) in tRNA = N(6)-L-threonylcarbamoyladenosine(37) in tRNA + AMP + H(+). In terms of biological role, required for the formation of a threonylcarbamoyl group on adenosine at position 37 (t(6)A37) in tRNAs that read codons beginning with adenine. Is involved in the transfer of the threonylcarbamoyl moiety of threonylcarbamoyl-AMP (TC-AMP) to the N6 group of A37, together with TsaE and TsaB. TsaD likely plays a direct catalytic role in this reaction. The polypeptide is tRNA N6-adenosine threonylcarbamoyltransferase (Prochlorococcus marinus (strain MIT 9312)).